A 191-amino-acid polypeptide reads, in one-letter code: Putative 3-methyladenine DNA glycosylase (191 aa).

It belongs to the DNA glycosylase MPG family.

This is Putative 3-methyladenine DNA glycosylase from Cutibacterium acnes (strain DSM 16379 / KPA171202) (Propionibacterium acnes).